A 434-amino-acid chain; its full sequence is Beta-enolase (434 aa).

Position 2 is an N-acetylalanine (A2). T72 carries the post-translational modification Phosphothreonine. 2 positions are modified to phosphoserine: S83 and S157. Substrate contacts are provided by H158 and E167. Position 176 is a phosphoserine (S176). T205 is modified (phosphothreonine). E210 acts as the Proton donor in catalysis. The residue at position 229 (T229) is a Phosphothreonine. Y236 carries the phosphotyrosine modification. D245 lines the Mg(2+) pocket. S263 bears the Phosphoserine mark. Residues E293 and D318 each contribute to the substrate site. Mg(2+) is bound by residues E293 and D318. The Proton acceptor role is filled by K343. Substrate contacts are provided by residues S370–S373 and K394.

This sequence belongs to the enolase family. Mammalian enolase is composed of 3 isozyme subunits, alpha, beta and gamma, which can form homodimers or heterodimers which are cell-type and development-specific. Interacts with PNKD. It depends on Mg(2+) as a cofactor. The alpha/alpha homodimer is expressed in embryo and in most adult tissues. The alpha/beta heterodimer and the beta/beta homodimer are found in striated muscle, and the alpha/gamma heterodimer and the gamma/gamma homodimer in neurons.

The protein localises to the cytoplasm. It carries out the reaction (2R)-2-phosphoglycerate = phosphoenolpyruvate + H2O. The protein operates within carbohydrate degradation; glycolysis; pyruvate from D-glyceraldehyde 3-phosphate: step 4/5. Its function is as follows. Glycolytic enzyme that catalyzes the conversion of 2-phosphoglycerate to phosphoenolpyruvate. Appears to have a function in striated muscle development and regeneration. The polypeptide is Beta-enolase (ENO3) (Homo sapiens (Human)).